We begin with the raw amino-acid sequence, 397 residues long: Sulfate adenylyltransferase (397 aa).

Belongs to the sulfate adenylyltransferase family.

It catalyses the reaction sulfate + ATP + H(+) = adenosine 5'-phosphosulfate + diphosphate. It participates in sulfur metabolism; hydrogen sulfide biosynthesis; sulfite from sulfate: step 1/3. The sequence is that of Sulfate adenylyltransferase (sat) from Allochromatium vinosum (strain ATCC 17899 / DSM 180 / NBRC 103801 / NCIMB 10441 / D) (Chromatium vinosum).